A 259-amino-acid polypeptide reads, in one-letter code: Sorbitol-6-phosphate 2-dehydrogenase (259 aa).

4–33 is an NAD(+) binding site; that stretch reads VAVVIGGGQTLGAFLCHGLAAEGYRVAVVD. S141 provides a ligand contact to substrate. Y154 acts as the Proton acceptor in catalysis.

The protein belongs to the short-chain dehydrogenases/reductases (SDR) family. In terms of assembly, homotetramer.

It catalyses the reaction D-sorbitol 6-phosphate + NAD(+) = beta-D-fructose 6-phosphate + NADH + H(+). It participates in carbohydrate metabolism; D-sorbitol degradation; D-fructose 6-phosphate from D-sorbitol 6-phosphate: step 1/1. This Escherichia coli (strain K12) protein is Sorbitol-6-phosphate 2-dehydrogenase (srlD).